Consider the following 118-residue polypeptide: Large ribosomal subunit protein bL20 (118 aa).

Belongs to the bacterial ribosomal protein bL20 family.

Functionally, binds directly to 23S ribosomal RNA and is necessary for the in vitro assembly process of the 50S ribosomal subunit. It is not involved in the protein synthesizing functions of that subunit. The protein is Large ribosomal subunit protein bL20 of Francisella tularensis subsp. tularensis (strain FSC 198).